We begin with the raw amino-acid sequence, 392 residues long: UPF0229 protein CPE1333 (392 aa).

The segment at 75–100 (VTTGTGEERRGDRISSDKRKAISNNK) is disordered. The span at 80-94 (GEERRGDRISSDKRK) shows a compositional bias: basic and acidic residues.

This sequence belongs to the UPF0229 family.

This is UPF0229 protein CPE1333 from Clostridium perfringens (strain 13 / Type A).